Here is a 596-residue protein sequence, read N- to C-terminus: Tripeptidyl-peptidase SED2 (596 aa).

The first 16 residues, M1–A16, serve as a signal peptide directing secretion. The propeptide at P18–S203 is removed in mature form. The Peptidase S53 domain occupies L210–P596. N265 carries an N-linked (GlcNAc...) asparagine glycan. Residues E286 and D290 each act as charge relay system in the active site. N403 is a glycosylation site (N-linked (GlcNAc...) asparagine). Residue S501 is the Charge relay system of the active site. Ca(2+) is bound by residues D543 and I544. N-linked (GlcNAc...) asparagine glycosylation occurs at N572. Ca(2+) contacts are provided by G576 and D578.

The cofactor is Ca(2+).

Its subcellular location is the secreted. The protein localises to the extracellular space. The enzyme catalyses Release of an N-terminal tripeptide from a polypeptide.. Its function is as follows. Secreted tripeptidyl-peptidase which degrades proteins at acidic pHs and is involved in virulence. The protein is Tripeptidyl-peptidase SED2 (SED2) of Arthroderma otae (strain ATCC MYA-4605 / CBS 113480) (Microsporum canis).